The primary structure comprises 139 residues: MPTPSMEDHIEQIYLLIANKGYARVSDIAEALSVLPSSVTKMVQKLDKDGYLVYEKYRGLTLTPKGEKLGKRLVQRHELLEQFLRMIGVDEERIYNDVEGIEHHLSWNSIDRIADLVQVMEENPDIVKKLEASKTQHNL.

An HTH dtxR-type domain is found at 1-63 (MPTPSMEDHI…YEKYRGLTLT (63 aa)). Residues Asp8, Glu11, His77, Glu99, Glu102, and His103 each coordinate Mn(2+).

The protein belongs to the DtxR/MntR family. In terms of assembly, homodimer.

It is found in the cytoplasm. DNA binding is strongly activated by Mn(2+). Central regulator of manganese homeostasis. The protein is HTH-type transcriptional regulator MntR of Lysinibacillus sphaericus (strain C3-41).